The following is a 324-amino-acid chain: Elongation factor Ts, mitochondrial (324 aa).

A mitochondrion-targeting transit peptide spans 1-44 (MSLLRSLRFFPVACTGRSARAVLLQPSQPWHTLHAGPSLSSSAS). N6-succinyllysine occurs at positions 75 and 132. Position 269 is a phosphoserine (S269).

Belongs to the EF-Ts family.

It is found in the mitochondrion. In terms of biological role, associates with the EF-Tu.GDP complex and induces the exchange of GDP to GTP. It remains bound to the aminoacyl-tRNA.EF-Tu.GTP complex up to the GTP hydrolysis stage on the ribosome. The polypeptide is Elongation factor Ts, mitochondrial (Tsfm) (Rattus norvegicus (Rat)).